The sequence spans 365 residues: Probable L-tyrosine/L-aspartate decarboxylase (365 aa).

Residue Lys224 is modified to N6-(pyridoxal phosphate)lysine.

This sequence belongs to the group II decarboxylase family. MfnA subfamily. It depends on pyridoxal 5'-phosphate as a cofactor.

The enzyme catalyses L-tyrosine + H(+) = tyramine + CO2. The catalysed reaction is L-aspartate + H(+) = beta-alanine + CO2. Its pathway is cofactor biosynthesis; methanofuran biosynthesis. The protein operates within cofactor biosynthesis; coenzyme A biosynthesis. In terms of biological role, catalyzes the decarboxylation of L-tyrosine to produce tyramine for methanofuran biosynthesis. Can also catalyze the decarboxylation of L-aspartate to produce beta-alanine for coenzyme A (CoA) biosynthesis. This chain is Probable L-tyrosine/L-aspartate decarboxylase, found in Methanoculleus marisnigri (strain ATCC 35101 / DSM 1498 / JR1).